Reading from the N-terminus, the 168-residue chain is Diphosphoinositol polyphosphate phosphohydrolase 1 (168 aa).

Methionine 1 bears the N-acetylmethionine mark. Residues arginine 10, 18–20, and 39–41 contribute to the substrate site; these read KKR and SSR. One can recognise a Nudix hydrolase domain in the interval 17–142; sequence YKKRAACLCF…KPVQASYFEA (126 aa). Residues glycine 50 and glutamate 66 each contribute to the Mg(2+) site. Residues 51–72 carry the Nudix box motif; sequence GGMEPEEEPSVAAVREVCEEAG. Glutamate 69 functions as the Proton acceptor in the catalytic mechanism. Glutamate 70 is a binding site for Mg(2+). Substrate-binding positions include 89–91, arginine 115, and lysine 133; that span reads RKH.

It belongs to the Nudix hydrolase family. DIPP subfamily. In terms of assembly, monomer. It depends on Mg(2+) as a cofactor. Requires Mn(2+) as cofactor. The cofactor is Zn(2+).

Its subcellular location is the cytoplasm. The protein resides in the nucleus. It carries out the reaction diphospho-myo-inositol polyphosphate + H2O = myo-inositol polyphosphate + phosphate.. The enzyme catalyses 5-diphospho-1D-myo-inositol 1,2,3,4,6-pentakisphosphate + H2O = 1D-myo-inositol hexakisphosphate + phosphate + H(+). It catalyses the reaction 3,5-bis(diphospho)-1D-myo-inositol 1,2,4,6-tetrakisphosphate + H2O = 3-diphospho-1D-myo-inositol 1,2,4,5,6-pentakisphosphate + phosphate + 2 H(+). The catalysed reaction is [phosphate](n+1) + n H2O = (n+1) phosphate + n H(+). It carries out the reaction P(1),P(5)-bis(5'-adenosyl) pentaphosphate + H2O = ADP + ATP + 2 H(+). The enzyme catalyses P(1),P(6)-bis(5'-adenosyl) hexaphosphate + H2O = 2 ATP + 2 H(+). It catalyses the reaction P(1),P(4)-bis(5'-adenosyl) tetraphosphate + H2O = AMP + ATP + 2 H(+). The catalysed reaction is a 5'-end (N(7)-methyl 5'-triphosphoguanosine)-ribonucleoside in mRNA + H2O = N(7)-methyl-GMP + a 5'-end diphospho-ribonucleoside in mRNA + 2 H(+). It carries out the reaction a 5'-end (N(7)-methyl 5'-triphosphoguanosine)-ribonucleoside in mRNA + H2O = N(7)-methyl-GDP + a 5'-end phospho-ribonucleoside in mRNA + 2 H(+). With respect to regulation, diphosphoinositol polyphosphate phosphohydrolase is inhibited by fluoride and InsP6. In terms of biological role, cleaves a beta-phosphate from the diphosphate groups in PP-InsP5 (diphosphoinositol pentakisphosphate) and [PP]2-InsP4 (bisdiphosphoinositol tetrakisphosphate), suggesting that it may play a role in signal transduction. InsP6 (inositol hexakisphosphate) is not a substrate. Acts as a negative regulator of the ERK1/2 pathway. Also able to catalyze the hydrolysis of dinucleoside oligophosphates, with diadenosine 5',5'''-P1,P6-hexaphosphate (Ap6A) and diadenosine 5',5'''- P1,P5-pentaphosphate (Ap5A) being the preferred substrates. The major reaction products are ADP and p4a from Ap6A and ADP and ATP from Ap5A. Also able to hydrolyze 5- phosphoribose 1-diphosphate. Acts as a decapping enzyme that can hydrolyze both monomethylated and unmethylated capped RNAs. Hydrolyzes monomethylated capped RNA after both the alpha- and beta-phosphates generating m7GMP + ppRNA and m7GDP + pRNA. Modulates the stability of a subset of mRNAs implicated in cell motility. Divalent cations zinc, magnesium and manganese determine its substrate specificity. Exhibits endopolyphosphatase activity in the presence of zinc ions. Exhibits diphosphoinositol polyphosphate phosphohydrolase in the presence of magnesium ions and diadenosine hexaphosphate hydrolase activity in the presence of manganese ions. Plays an important role in limiting DNA damage and maintaining cell survival upon oxidative stress via its endopolyphosphatase activity. This chain is Diphosphoinositol polyphosphate phosphohydrolase 1, found in Rattus norvegicus (Rat).